Here is a 362-residue protein sequence, read N- to C-terminus: tRNA 2-selenouridine synthase (362 aa).

A Rhodanese domain is found at 12–135 (FLNDTPLLDV…LRRFLIDEME (124 aa)). The S-selanylcysteine intermediate role is filled by C95.

The protein belongs to the SelU family. In terms of assembly, monomer.

It carries out the reaction 5-methylaminomethyl-2-thiouridine(34) in tRNA + selenophosphate + (2E)-geranyl diphosphate + H2O + H(+) = 5-methylaminomethyl-2-selenouridine(34) in tRNA + (2E)-thiogeraniol + phosphate + diphosphate. It catalyses the reaction 5-methylaminomethyl-2-thiouridine(34) in tRNA + (2E)-geranyl diphosphate = 5-methylaminomethyl-S-(2E)-geranyl-thiouridine(34) in tRNA + diphosphate. The catalysed reaction is 5-methylaminomethyl-S-(2E)-geranyl-thiouridine(34) in tRNA + selenophosphate + H(+) = 5-methylaminomethyl-2-(Se-phospho)selenouridine(34) in tRNA + (2E)-thiogeraniol. The enzyme catalyses 5-methylaminomethyl-2-(Se-phospho)selenouridine(34) in tRNA + H2O = 5-methylaminomethyl-2-selenouridine(34) in tRNA + phosphate. Involved in the post-transcriptional modification of the uridine at the wobble position (U34) of tRNA(Lys), tRNA(Glu) and tRNA(Gln). Catalyzes the conversion of 2-thiouridine (S2U-RNA) to 2-selenouridine (Se2U-RNA). Acts in a two-step process involving geranylation of 2-thiouridine (S2U) to S-geranyl-2-thiouridine (geS2U) and subsequent selenation of the latter derivative to 2-selenouridine (Se2U) in the tRNA chain. In Alcanivorax borkumensis (strain ATCC 700651 / DSM 11573 / NCIMB 13689 / SK2), this protein is tRNA 2-selenouridine synthase.